The primary structure comprises 1013 residues: A-type ATP synthase subunit A (1013 aa).

A DOD-type homing endonuclease domain is found at Phe-392–Ile-525.

Belongs to the ATPase alpha/beta chains family. In terms of assembly, has multiple subunits with at least A(3), B(3), C, D, E, F, H, I and proteolipid K(x). This protein undergoes a protein self splicing that involves a post-translational excision of the VDE intervening region (intein) followed by peptide ligation.

It localises to the cell membrane. It carries out the reaction ATP + H2O + 4 H(+)(in) = ADP + phosphate + 5 H(+)(out). In terms of biological role, component of the A-type ATP synthase that produces ATP from ADP in the presence of a proton gradient across the membrane. The A chain is the catalytic subunit. This chain is A-type ATP synthase subunit A, found in Pyrococcus furiosus (strain ATCC 43587 / DSM 3638 / JCM 8422 / Vc1).